Reading from the N-terminus, the 472-residue chain is Maintenance of mitochondrial morphology protein 1 (472 aa).

At Met-1–Gly-22 the chain is on the lumenal side. A helical transmembrane segment spans residues Phe-23 to Phe-43. The Cytoplasmic segment spans residues Gly-44–Gln-472. Disordered regions lie at residues Ser-51–Ser-92, Leu-270–Ser-303, and Arg-370–Gln-472. Residues Ser-81–Ser-92 show a composition bias toward polar residues. The SMP-LTD domain maps to Gln-124–Pro-365. Over residues Leu-270–Pro-280 the composition is skewed to pro residues. The span at Thr-281 to Asp-297 shows a compositional bias: low complexity. A compositionally biased stretch (basic and acidic residues) spans Thr-450–His-460.

Belongs to the MMM1 family. As to quaternary structure, homodimer. Component of the ER-mitochondria encounter structure (ERMES) or MDM complex, composed of mmm1, mdm10, mdm12 and mdm34. A mmm1 homodimer associates with one molecule of mdm12 on each side in a pairwise head-to-tail manner, and the SMP-LTD domains of mmm1 and mdm12 generate a continuous hydrophobic tunnel for phospholipid trafficking.

It localises to the endoplasmic reticulum membrane. In terms of biological role, component of the ERMES/MDM complex, which serves as a molecular tether to connect the endoplasmic reticulum (ER) and mitochondria. Components of this complex are involved in the control of mitochondrial shape and protein biogenesis, and function in nonvesicular lipid trafficking between the ER and mitochondria. The mdm12-mmm1 subcomplex functions in the major beta-barrel assembly pathway that is responsible for biogenesis of all outer membrane beta-barrel proteins, and acts in a late step after the SAM complex. The mdm10-mdm12-mmm1 subcomplex further acts in the TOM40-specific pathway after the action of the mdm12-mmm1 complex. Essential for establishing and maintaining the structure of mitochondria and maintenance of mtDNA nucleoids. The protein is Maintenance of mitochondrial morphology protein 1 of Emericella nidulans (strain FGSC A4 / ATCC 38163 / CBS 112.46 / NRRL 194 / M139) (Aspergillus nidulans).